A 599-amino-acid chain; its full sequence is Adenine deaminase (599 aa).

This sequence belongs to the metallo-dependent hydrolases superfamily. Adenine deaminase family. Mn(2+) is required as a cofactor.

The enzyme catalyses adenine + H2O + H(+) = hypoxanthine + NH4(+). This is Adenine deaminase from Clostridium botulinum (strain Langeland / NCTC 10281 / Type F).